Consider the following 83-residue polypeptide: Acyl carrier protein MmaB (83 aa).

One can recognise a Carrier domain in the interval 3–83 (DPVRQRILLA…LSQSELESPT (81 aa)). O-(pantetheine 4'-phosphoryl)serine is present on Ser-39.

It belongs to the acyl carrier protein (ACP) family. Requires pantetheine 4'-phosphate as cofactor.

The protein operates within lipid metabolism; fatty acid metabolism. Its function is as follows. Acyl-carrier protein (ACP) involved in the biosynthesis of a unique class of isonitrile lipopeptides (INLPs) that seem to play a role in metal acquisition in M.marinum. Is the dedicated ACP for the loading of activated acyl groups catalyzed by MmaC. The chain is Acyl carrier protein MmaB from Mycobacterium marinum (strain ATCC BAA-535 / M).